The chain runs to 37 residues: Large ribosomal subunit protein bL36 (37 aa).

This sequence belongs to the bacterial ribosomal protein bL36 family.

The chain is Large ribosomal subunit protein bL36 from Mycoplasma genitalium (strain ATCC 33530 / DSM 19775 / NCTC 10195 / G37) (Mycoplasmoides genitalium).